Here is a 190-residue protein sequence, read N- to C-terminus: Guanylate kinase (190 aa).

A Guanylate kinase-like domain is found at 3 to 185 (NYIFIISAPS…SLEQLCKYFE (183 aa)). Residue 10 to 17 (APSGAGKS) coordinates ATP.

The protein belongs to the guanylate kinase family.

The protein resides in the cytoplasm. It catalyses the reaction GMP + ATP = GDP + ADP. Functionally, essential for recycling GMP and indirectly, cGMP. The protein is Guanylate kinase of Francisella tularensis subsp. holarctica (strain LVS).